The following is a 365-amino-acid chain: tRNA-specific 2-thiouridylase MnmA (365 aa).

ATP contacts are provided by residues 6–13 (AMSGGVDS) and Met-32. Cys-101 (nucleophile) is an active-site residue. A disulfide bridge links Cys-101 with Cys-199. Residue Gly-125 participates in ATP binding. Residues 148–150 (KDQ) are interaction with tRNA. Residue Cys-199 is the Cysteine persulfide intermediate of the active site.

The protein belongs to the MnmA/TRMU family.

Its subcellular location is the cytoplasm. It carries out the reaction S-sulfanyl-L-cysteinyl-[protein] + uridine(34) in tRNA + AH2 + ATP = 2-thiouridine(34) in tRNA + L-cysteinyl-[protein] + A + AMP + diphosphate + H(+). In terms of biological role, catalyzes the 2-thiolation of uridine at the wobble position (U34) of tRNA, leading to the formation of s(2)U34. The protein is tRNA-specific 2-thiouridylase MnmA of Kineococcus radiotolerans (strain ATCC BAA-149 / DSM 14245 / SRS30216).